The following is a 442-amino-acid chain: tRNA modification GTPase MnmE (442 aa).

Residues R23, E82, and K121 each coordinate (6S)-5-formyl-5,6,7,8-tetrahydrofolate. The 147-residue stretch at 217 to 363 (PFKIAIIGET…LVDLLTKYIN (147 aa)) folds into the TrmE-type G domain. N227 contacts K(+). GTP-binding positions include 227–232 (NVGKSS), 246–252 (SNIKGST), and 271–274 (DTAG). Residue S231 participates in Mg(2+) binding. The K(+) site is built by S246, I248, and S251. T252 contributes to the Mg(2+) binding site. K442 provides a ligand contact to (6S)-5-formyl-5,6,7,8-tetrahydrofolate.

It belongs to the TRAFAC class TrmE-Era-EngA-EngB-Septin-like GTPase superfamily. TrmE GTPase family. Homodimer. Heterotetramer of two MnmE and two MnmG subunits. K(+) serves as cofactor.

It localises to the cytoplasm. Functionally, exhibits a very high intrinsic GTPase hydrolysis rate. Involved in the addition of a carboxymethylaminomethyl (cmnm) group at the wobble position (U34) of certain tRNAs, forming tRNA-cmnm(5)s(2)U34. The polypeptide is tRNA modification GTPase MnmE (Mycoplasma genitalium (strain ATCC 33530 / DSM 19775 / NCTC 10195 / G37) (Mycoplasmoides genitalium)).